Reading from the N-terminus, the 595-residue chain is GRB2-associated-binding protein 3 (595 aa).

The 113-residue stretch at 5-117 (DTVCMGWLIK…WVHSISQVCN (113 aa)) folds into the PH domain. The disordered stretch occupies residues 295-339 (SGVKELNIMSNTPPPRPPKPSYLSEQRQDQPLLTGHSSNKKPGYT). Polar residues predominate over residues 317–331 (LSEQRQDQPLLTGHS). S346 is modified (phosphoserine). Disordered stretches follow at residues 389–408 (PSAEDSYVPMSPKGTASELR) and 418–463 (PMSS…QEHT). Residues 454–463 (RNLSTIQEHT) are compositionally biased toward polar residues. Residue S480 is modified to Phosphoserine. The segment at 493–513 (STPSEEEEEEEEEEEEEEEEE) is disordered. Positions 496–513 (SEEEEEEEEEEEEEEEEE) are enriched in acidic residues.

The protein belongs to the GAB family. In terms of assembly, interacts with PIK3R/p85, SHP2 and GRAP2/MONA. May interact with Grb2. Post-translationally, phosphorylated on tyrosine residue(s) after macrophage colony-stimulating factor (M-CSF) receptor stimulation. Highly expressed in spleen and thymus and weakly in brain, heart, lung, kidney, uterus, and embryonic stem cells. Also expressed in myeloid and macrophage cell lines.

In Mus musculus (Mouse), this protein is GRB2-associated-binding protein 3 (Gab3).